The following is a 62-amino-acid chain: Large ribosomal subunit protein bL28 (62 aa).

The segment at 1–28 (MARVCTITGRKARSGNSRSHAMNATKRK) is disordered.

This sequence belongs to the bacterial ribosomal protein bL28 family.

This chain is Large ribosomal subunit protein bL28, found in Bacillus anthracis (strain CDC 684 / NRRL 3495).